The sequence spans 112 residues: Putative pterin-4-alpha-carbinolamine dehydratase (112 aa).

The protein belongs to the pterin-4-alpha-carbinolamine dehydratase family.

The enzyme catalyses (4aS,6R)-4a-hydroxy-L-erythro-5,6,7,8-tetrahydrobiopterin = (6R)-L-erythro-6,7-dihydrobiopterin + H2O. The polypeptide is Putative pterin-4-alpha-carbinolamine dehydratase (Hahella chejuensis (strain KCTC 2396)).